A 962-amino-acid polypeptide reads, in one-letter code: Translation initiation factor IF-2 (962 aa).

Residues 52-77 (RSHGQADDSSRKKITLTKRETSEIRQ) are compositionally biased toward basic and acidic residues. Disordered stretches follow at residues 52–87 (RSHG…TRTV) and 121–378 (AVEE…EPVV). Residues 78–87 (SDGTGKTRTV) show a composition bias toward polar residues. Composition is skewed to basic and acidic residues over residues 123 to 183 (EEAR…KAEE), 197 to 250 (DSSR…EAEA), and 267 to 278 (PSERKAEEKKAE). Residues 342–355 (TSGGVGGWRGGPRG) show a composition bias toward gly residues. The 170-residue stretch at 462–631 (PRPPVVTVMG…LLQAEVLELT (170 aa)) folds into the tr-type G domain. A G1 region spans residues 471–478 (GHVDHGKT). 471 to 478 (GHVDHGKT) contacts GTP. Residues 496-500 (GITQH) are G2. The segment at 517 to 520 (DTPG) is G3. Residues 517-521 (DTPGH) and 571-574 (NKID) each bind GTP. Residues 571–574 (NKID) form a G4 region. Residues 607-609 (SAK) form a G5 region.

It belongs to the TRAFAC class translation factor GTPase superfamily. Classic translation factor GTPase family. IF-2 subfamily.

The protein resides in the cytoplasm. Functionally, one of the essential components for the initiation of protein synthesis. Protects formylmethionyl-tRNA from spontaneous hydrolysis and promotes its binding to the 30S ribosomal subunits. Also involved in the hydrolysis of GTP during the formation of the 70S ribosomal complex. The polypeptide is Translation initiation factor IF-2 (Cupriavidus necator (strain ATCC 17699 / DSM 428 / KCTC 22496 / NCIMB 10442 / H16 / Stanier 337) (Ralstonia eutropha)).